A 243-amino-acid chain; its full sequence is DNA repair protein RecO (243 aa).

This sequence belongs to the RecO family.

Functionally, involved in DNA repair and RecF pathway recombination. The sequence is that of DNA repair protein RecO from Caulobacter sp. (strain K31).